Reading from the N-terminus, the 409-residue chain is Elongation factor Tu, plastid (409 aa).

One can recognise a tr-type G domain in the interval 10–214 (KPHINIGTIG…SVDSYIPTPV (205 aa)). The tract at residues 19-26 (GHVDHGKT) is G1. A GTP-binding site is contributed by 19–26 (GHVDHGKT). T26 is a binding site for Mg(2+). The tract at residues 60–64 (GITIN) is G2. Residues 81–84 (DCPG) are G3. GTP is bound by residues 81-85 (DCPGH) and 136-139 (NKED). The tract at residues 136–139 (NKED) is G4. Residues 174 to 176 (SAL) are G5.

It belongs to the TRAFAC class translation factor GTPase superfamily. Classic translation factor GTPase family. EF-Tu/EF-1A subfamily.

It localises to the plastid. The enzyme catalyses GTP + H2O = GDP + phosphate + H(+). Functionally, GTP hydrolase that promotes the GTP-dependent binding of aminoacyl-tRNA to the A-site of ribosomes during protein biosynthesis. The polypeptide is Elongation factor Tu, plastid (tufA) (Helicosporidium sp. subsp. Simulium jonesii (Green alga)).